A 384-amino-acid chain; its full sequence is Geranylgeranyl pyrophosphate synthase (384 aa).

2 disordered regions span residues 1 to 25 and 39 to 78; these read MVPNANSNTVSLQSPNAIPPRTSST and RPVPESDWLGQNNTRNRSSSTTAIPLTGMHATGPQDPARY. Residues 47–62 show a composition bias toward polar residues; the sequence is LGQNNTRNRSSSTTAI. Lys-112, Arg-115, and His-144 together coordinate isopentenyl diphosphate. 2 residues coordinate Mg(2+): Asp-151 and Asp-155. Arg-160 contacts dimethylallyl diphosphate. Arg-161 lines the isopentenyl diphosphate pocket. Dimethylallyl diphosphate contacts are provided by Lys-238, Thr-239, and Gln-272. Mg(2+) is bound at residue Asp-275. Dimethylallyl diphosphate is bound by residues Asn-279, Lys-289, and Lys-299.

Belongs to the FPP/GGPP synthase family. It depends on Mg(2+) as a cofactor.

It catalyses the reaction isopentenyl diphosphate + dimethylallyl diphosphate = (2E)-geranyl diphosphate + diphosphate. It carries out the reaction isopentenyl diphosphate + (2E)-geranyl diphosphate = (2E,6E)-farnesyl diphosphate + diphosphate. The enzyme catalyses isopentenyl diphosphate + (2E,6E)-farnesyl diphosphate = (2E,6E,10E)-geranylgeranyl diphosphate + diphosphate. It participates in secondary metabolite biosynthesis. Its function is as follows. Catalyzes the trans-addition of the 3 molecules of isopentenyl diphosphate (IPP) onto dimethylallyl diphosphate (DMAPP) to form geranylgeranyl pyrophosphate (GGPP). GGPP is a precursor for the biosynthesis of many secondary metabolites, including the indole diterpenes nodulisporic acids (NA). The polypeptide is Geranylgeranyl pyrophosphate synthase (Hypoxylon pulicicidum).